The primary structure comprises 222 residues: Putative cobalt transport protein CbiM (222 aa).

The next 6 membrane-spanning stretches (helical) occupy residues 8 to 28, 43 to 63, 75 to 95, 107 to 127, 134 to 154, and 178 to 198; these read LPMEWAIVWYIISAIVVGYGI, PLLAISGAFMFVLSSLKLPSV, LGAILFGPAITSVLATIVLLF, TLGANIFSMGIMGPFVGYLVF, LNITWVVMLTAIFADWATYLT, and IFAITQIPLAIAEGLITALLW.

It belongs to the CbiM family. In terms of assembly, forms an energy-coupling factor (ECF) transporter complex composed of an ATP-binding protein (A component, CbiO), a transmembrane protein (T component, CbiQ) and 2 possible substrate-capture proteins (S components, CbiM and CbiN) of unknown stoichimetry.

The protein resides in the cell membrane. It functions in the pathway cofactor biosynthesis; adenosylcobalamin biosynthesis. Its function is as follows. Part of the energy-coupling factor (ECF) transporter complex CbiMNOQ involved in cobalt import. The protein is Putative cobalt transport protein CbiM of Methanococcus voltae (strain ATCC BAA-1334 / A3).